Here is a 545-residue protein sequence, read N- to C-terminus: Glucose-6-phosphate isomerase (545 aa).

Glu-351 (proton donor) is an active-site residue. Active-site residues include His-382 and Lys-510.

The protein belongs to the GPI family.

The protein localises to the cytoplasm. It carries out the reaction alpha-D-glucose 6-phosphate = beta-D-fructose 6-phosphate. The protein operates within carbohydrate biosynthesis; gluconeogenesis. Its pathway is carbohydrate degradation; glycolysis; D-glyceraldehyde 3-phosphate and glycerone phosphate from D-glucose: step 2/4. Functionally, catalyzes the reversible isomerization of glucose-6-phosphate to fructose-6-phosphate. The sequence is that of Glucose-6-phosphate isomerase from Shewanella baltica (strain OS155 / ATCC BAA-1091).